A 254-amino-acid chain; its full sequence is Aquaporin TIP1-2 (254 aa).

The next 2 membrane-spanning stretches (helical) occupy residues 24 to 44 (VAEF…GMAF) and 56 to 76 (AGLI…VSVG). The NPA 1 signature appears at 85–87 (NPA). Helical transmembrane passes span 103–123 (ALVY…LLKI), 144–164 (AVVL…ATAV), and 173–193 (VIAP…GGAF). The NPA 2 signature appears at 199-201 (NPA). The helical transmembrane segment at 220-240 (WVGPLAGAAIAALVYDIIFIG) threads the bilayer.

The protein belongs to the MIP/aquaporin (TC 1.A.8) family. TIP (TC 1.A.8.10) subfamily.

The protein resides in the vacuole membrane. Aquaporins facilitate the transport of water and small neutral solutes across cell membranes. The protein is Aquaporin TIP1-2 (TIP1-2) of Zea mays (Maize).